The chain runs to 1630 residues: Separin (1630 aa).

The segment at 1016-1037 (SKHSTGLKLCDSPRSSSMTPRG) is disordered. The 100-residue stretch at 1443-1542 (EDNISMILNP…SAAMKYYGKL (100 aa)) folds into the Peptidase C50 domain. C1531 is a catalytic residue.

May bind calcium. Interacts with PDS1. Interacts with MCD1.

It is found in the nucleus. The protein resides in the cytoplasm. The protein localises to the cytoskeleton. It localises to the microtubule organizing center. Its subcellular location is the spindle pole body. It catalyses the reaction All bonds known to be hydrolyzed by this endopeptidase have arginine in P1 and an acidic residue in P4. P6 is often occupied by an acidic residue or by a hydroxy-amino-acid residue, the phosphorylation of which enhances cleavage.. Its activity is regulated as follows. It is inactivated via its interaction with PDS1, which probably covers its active site. PDS1 degradation at anaphase, liberates it and triggers MCD1 cleavage. Its function is as follows. Caspase-like protease, which plays a central role in the chromosome segregation by cleaving the MCD1/SCC1 subunit of the cohesin complex at the onset of anaphase. During most of the cell cycle, it is inactivated by securin/PDS1 protein. It also promotes anaphase spindle elongation. A component of the FEAR (CDC14 early anaphase release) network which promotes CDC14 release from the nucleolus during early anaphase. Cleaves SLK19. This is Separin (ESP1) from Saccharomyces cerevisiae (strain ATCC 204508 / S288c) (Baker's yeast).